A 215-amino-acid polypeptide reads, in one-letter code: Adenylate kinase (215 aa).

Gly-10–Thr-15 contributes to the ATP binding site. An NMP region spans residues Ser-30–Val-59. AMP-binding positions include Thr-31, Arg-36, Asn-57–Val-59, Gly-85–Arg-88, and Gln-92. The interval Gly-122–Asp-159 is LID. ATP-binding positions include Arg-123 and Ile-132–Tyr-133. Residues Arg-156 and Arg-167 each coordinate AMP. Residue Gly-201 coordinates ATP.

Belongs to the adenylate kinase family. In terms of assembly, monomer.

It localises to the cytoplasm. The enzyme catalyses AMP + ATP = 2 ADP. Its pathway is purine metabolism; AMP biosynthesis via salvage pathway; AMP from ADP: step 1/1. Catalyzes the reversible transfer of the terminal phosphate group between ATP and AMP. Plays an important role in cellular energy homeostasis and in adenine nucleotide metabolism. The chain is Adenylate kinase from Pseudomonas syringae pv. tomato (strain ATCC BAA-871 / DC3000).